The primary structure comprises 1288 residues: 5-oxoprolinase (1288 aa).

A Phosphothreonine modification is found at Thr-151. Residues 1248–1272 (PGGGGYGDPEDPAPPPGSPPQALAF) form a disordered region. Ser-1265 carries the phosphoserine modification.

It belongs to the oxoprolinase family. Homodimer.

The protein localises to the cytoplasm. It localises to the cytosol. It catalyses the reaction 5-oxo-L-proline + ATP + 2 H2O = L-glutamate + ADP + phosphate + H(+). Functionally, catalyzes the cleavage of 5-oxo-L-proline to form L-glutamate coupled to the hydrolysis of ATP to ADP and inorganic phosphate. This Homo sapiens (Human) protein is 5-oxoprolinase.